The sequence spans 229 residues: Large ribosomal subunit protein uL1 (229 aa).

The protein belongs to the universal ribosomal protein uL1 family. As to quaternary structure, part of the 50S ribosomal subunit.

In terms of biological role, binds directly to 23S rRNA. The L1 stalk is quite mobile in the ribosome, and is involved in E site tRNA release. Its function is as follows. Protein L1 is also a translational repressor protein, it controls the translation of the L11 operon by binding to its mRNA. This chain is Large ribosomal subunit protein uL1, found in Actinobacillus pleuropneumoniae serotype 5b (strain L20).